The following is a 164-amino-acid chain: Peptidyl-prolyl cis-trans isomerase A-like 4H (164 aa).

The region spanning F7–Q163 is the PPIase cyclophilin-type domain. N-linked (GlcNAc...) asparagine glycans are attached at residues N71 and N108.

The protein belongs to the cyclophilin-type PPIase family. PPIase A subfamily.

It localises to the cytoplasm. It catalyses the reaction [protein]-peptidylproline (omega=180) = [protein]-peptidylproline (omega=0). PPIases accelerate the folding of proteins. It catalyzes the cis-trans isomerization of proline imidic peptide bonds in oligopeptides. In Homo sapiens (Human), this protein is Peptidyl-prolyl cis-trans isomerase A-like 4H.